The primary structure comprises 568 residues: Proline--tRNA ligase (568 aa).

This sequence belongs to the class-II aminoacyl-tRNA synthetase family. ProS type 1 subfamily. In terms of assembly, homodimer.

It is found in the cytoplasm. The catalysed reaction is tRNA(Pro) + L-proline + ATP = L-prolyl-tRNA(Pro) + AMP + diphosphate. Functionally, catalyzes the attachment of proline to tRNA(Pro) in a two-step reaction: proline is first activated by ATP to form Pro-AMP and then transferred to the acceptor end of tRNA(Pro). As ProRS can inadvertently accommodate and process non-cognate amino acids such as alanine and cysteine, to avoid such errors it has two additional distinct editing activities against alanine. One activity is designated as 'pretransfer' editing and involves the tRNA(Pro)-independent hydrolysis of activated Ala-AMP. The other activity is designated 'posttransfer' editing and involves deacylation of mischarged Ala-tRNA(Pro). The misacylated Cys-tRNA(Pro) is not edited by ProRS. In Listeria monocytogenes serotype 4b (strain F2365), this protein is Proline--tRNA ligase.